We begin with the raw amino-acid sequence, 819 residues long: Protein kinase C-binding protein NELL2 (819 aa).

Residues 1–24 form the signal peptide; that stretch reads MHAMESRVLLRTFCVILGLGAVWG. N-linked (GlcNAc...) asparagine glycans are attached at residues asparagine 56, asparagine 228, asparagine 296, and asparagine 301. The region spanning 67 to 231 is the Laminin G-like domain; the sequence is PRSIKASTAT…AQCPDLNRTC (165 aa). One can recognise a VWFC 1 domain in the interval 275–334; it reads RTCTVKGTTYRESESWTDGCKNCTCLNGTIQCETLVCPAPDCPPKSAPAYVDGKCCKECK. Residues 400–442 enclose the EGF-like 1 domain; the sequence is GYDFCSEKHTCMENSVCRNLNDRAVCSCRDGFRALREDNAYCE. Intrachain disulfides connect cysteine 404-cysteine 416, cysteine 410-cysteine 425, and cysteine 427-cysteine 441. Aspartate 443, isoleucine 444, and glutamate 446 together coordinate Ca(2+). The region spanning 443 to 484 is the EGF-like 2; calcium-binding domain; that stretch reads DIDECAEGRHYCRENTMCVNTPGSFMCICKTGYIRIDDYSCT. 9 disulfides stabilise this stretch: cysteine 447-cysteine 460, cysteine 454-cysteine 469, cysteine 471-cysteine 483, cysteine 489-cysteine 502, cysteine 496-cysteine 511, cysteine 513-cysteine 524, cysteine 528-cysteine 538, cysteine 532-cysteine 544, and cysteine 546-cysteine 555. Residues asparagine 462, threonine 463, and serine 466 each coordinate Ca(2+). Positions 485–525 constitute an EGF-like 3; calcium-binding domain; sequence EHDECLTNQHNCDENALCFNTVGGHNCVCKPGYTGNGTTCK. A glycan (N-linked (GlcNAc...) asparagine) is linked at asparagine 520. The 31-residue stretch at 526–556 folds into the EGF-like 4 domain; sequence AFCKDGCRNGGACIAANVCACPQGFTGPSCE. O-linked (GlcNAc...) threonine glycosylation is present at threonine 551. Ca(2+)-binding residues include aspartate 558, isoleucine 559, and glutamate 561. In terms of domain architecture, EGF-like 5; calcium-binding spans 558-604; it reads DIDECSEGFVQCDSRANCINLPGWYHCECRDGYHDNGMFAPGGESCE. Intrachain disulfides connect cysteine 562–cysteine 575, cysteine 569–cysteine 584, and cysteine 586–cysteine 603. The Ca(2+) site is built by asparagine 577, leucine 578, and tryptophan 581. Ca(2+) contacts are provided by aspartate 605, isoleucine 606, and glutamate 608. In terms of domain architecture, EGF-like 6; calcium-binding spans 605 to 640; it reads DIDECGTGRHSCTNDTICFNLDGGYDCRCPHGKNCT. Disulfide bonds link cysteine 609/cysteine 622, cysteine 616/cysteine 631, and cysteine 633/cysteine 639. The N-linked (GlcNAc...) asparagine glycan is linked to asparagine 618. 3 residues coordinate Ca(2+): asparagine 624, leucine 625, and glycine 628. The N-linked (GlcNAc...) asparagine glycan is linked to asparagine 638. The VWFC 2 domain maps to 701–759; the sequence is SQCLHQNGETVYNSGDTWVQDCRQCRCLQGEVDCWPLACPEVECEFSVLPENECCPRCV.

Homotrimer. Interacts with NICOL1; this interaction triggers epididymal differentiation. Interacts (via EGF domains) with ROBO3 (via FN domains); binding to ROBO3 induces repulsive guidance cue for commissural axons. Expressed in brain and testis but not in epididymis. Expressed in regions flanking the commissural axon trajectory, including the ventral horn.

It is found in the secreted. Plays multiple roles in neural tissues, regulates neuronal proliferation, survival, differentiation, polarization, as well as axon guidance and synaptic functions. Plays an important role in axon development during neuronal differentiation through the MAPK intracellular signaling pathway. Via binding to its receptor ROBO3, plays a role in axon guidance, functioning as a repulsive axon guidance cue that contributes to commissural axon guidance to the midline. Required for neuron survival through the modulation of MAPK signaling pathways too. Involved in the regulation of hypothalamic GNRH secretion and the control of puberty. Its function is as follows. Epididymal-secreted protein that signals through a ROS1-pathway to regulate the epididymal initial segment (IS) maturation, sperm maturation and male fertility. The polypeptide is Protein kinase C-binding protein NELL2 (Mus musculus (Mouse)).